The sequence spans 99 residues: MLDQTLTSEALVTTVTHAQTHQPVQRPLRDSVQQALRNYLAQLNGQDVAELYDMVLSEVEAPMLDIIMQYTRGNQTRAAIMMGINRGTLRKKLKKYGMN.

The H-T-H motif DNA-binding region spans 75–94 (QTRAAIMMGINRGTLRKKLK).

Belongs to the transcriptional regulatory Fis family. As to quaternary structure, homodimer.

Functionally, activates ribosomal RNA transcription. Plays a direct role in upstream activation of rRNA promoters. This Tolumonas auensis (strain DSM 9187 / NBRC 110442 / TA 4) protein is DNA-binding protein Fis.